We begin with the raw amino-acid sequence, 426 residues long: Histidine--tRNA ligase (426 aa).

This sequence belongs to the class-II aminoacyl-tRNA synthetase family. As to quaternary structure, homodimer.

Its subcellular location is the cytoplasm. It carries out the reaction tRNA(His) + L-histidine + ATP = L-histidyl-tRNA(His) + AMP + diphosphate + H(+). The chain is Histidine--tRNA ligase from Streptococcus pyogenes serotype M3 (strain ATCC BAA-595 / MGAS315).